The following is a 192-amino-acid chain: Signal peptidase complex catalytic subunit sec11 (192 aa).

Residues 1–18 (MLSFLSSNLSSTRQSLAQ) are Cytoplasmic-facing. Residues 19–39 (VLNFALVLSTAFMLWKGLSVF) form a helical; Signal-anchor for type II membrane protein membrane-spanning segment. The Lumenal portion of the chain corresponds to 40-192 (TASSSPIVVV…GLMVILQREQ (153 aa)). Residues Ser-53, His-92, and Asp-133 each act as charge relay system in the active site. The tract at residues 177–188 (VLLGIMGLMVIL) is C-terminal short (CTS) helix.

It belongs to the peptidase S26B family. In terms of assembly, component of the signal peptidase complex (SPC) composed of a catalytic subunit SEC11 and three accessory subunits SPC1, SPC2 and SPC3. The complex induces a local thinning of the ER membrane which is used to measure the length of the signal peptide (SP) h-region of protein substrates. This ensures the selectivity of the complex towards h-regions shorter than 18-20 amino acids. SPC associates with the translocon complex.

It localises to the endoplasmic reticulum membrane. The enzyme catalyses Cleavage of hydrophobic, N-terminal signal or leader sequences from secreted and periplasmic proteins.. In terms of biological role, catalytic component of the signal peptidase complex (SPC) which catalyzes the cleavage of N-terminal signal sequences from nascent proteins as they are translocated into the lumen of the endoplasmic reticulum. Specifically cleaves N-terminal signal peptides that contain a hydrophobic alpha-helix (h-region) shorter than 18-20 amino acids. This chain is Signal peptidase complex catalytic subunit sec11 (sec11), found in Neosartorya fischeri (strain ATCC 1020 / DSM 3700 / CBS 544.65 / FGSC A1164 / JCM 1740 / NRRL 181 / WB 181) (Aspergillus fischerianus).